A 154-amino-acid chain; its full sequence is Aspartate carbamoyltransferase regulatory chain (154 aa).

Zn(2+)-binding residues include C109, C114, C138, and C141.

Belongs to the PyrI family. Contains catalytic and regulatory chains. Zn(2+) serves as cofactor.

In terms of biological role, involved in allosteric regulation of aspartate carbamoyltransferase. This chain is Aspartate carbamoyltransferase regulatory chain, found in Methanothrix thermoacetophila (strain DSM 6194 / JCM 14653 / NBRC 101360 / PT) (Methanosaeta thermophila).